An 893-amino-acid polypeptide reads, in one-letter code: Protein translocase subunit SecA (893 aa).

ATP is bound by residues Gln-87, 105–109, and Asp-512; that span reads GEGKT. Basic and acidic residues predominate over residues 840–849; that stretch reads VEEQHRKSEE. A disordered region spans residues 840 to 893; it reads VEEQHRKSEEVPMDFQHQSASSPSEQAQTPRVGRNEPCPCGSGKKYKQCHGKLA. The span at 855–868 shows a compositional bias: polar residues; sequence QHQSASSPSEQAQT. Zn(2+)-binding residues include Cys-877, Cys-879, Cys-888, and His-889. A compositionally biased stretch (basic residues) spans 883–893; the sequence is KKYKQCHGKLA.

Belongs to the SecA family. Monomer and homodimer. Part of the essential Sec protein translocation apparatus which comprises SecA, SecYEG and auxiliary proteins SecDF-YajC and YidC. The cofactor is Zn(2+).

Its subcellular location is the cell inner membrane. The protein resides in the cytoplasm. It carries out the reaction ATP + H2O + cellular proteinSide 1 = ADP + phosphate + cellular proteinSide 2.. Part of the Sec protein translocase complex. Interacts with the SecYEG preprotein conducting channel. Has a central role in coupling the hydrolysis of ATP to the transfer of proteins into and across the cell membrane, serving both as a receptor for the preprotein-SecB complex and as an ATP-driven molecular motor driving the stepwise translocation of polypeptide chains across the membrane. This is Protein translocase subunit SecA from Colwellia psychrerythraea (strain 34H / ATCC BAA-681) (Vibrio psychroerythus).